We begin with the raw amino-acid sequence, 901 residues long: Protein translocase subunit SecA 1 (901 aa).

ATP-binding positions include Gln89, 107-111 (GEGKT), and Asp502. The segment at 856–875 (AEAKASGDARPGFVEDDPST) is disordered. Zn(2+) contacts are provided by Cys885, Cys887, Cys896, and His897.

Belongs to the SecA family. Monomer and homodimer. Part of the essential Sec protein translocation apparatus which comprises SecA, SecYEG and auxiliary proteins SecDF-YajC and YidC. The cofactor is Zn(2+).

It localises to the cell inner membrane. Its subcellular location is the cytoplasm. The enzyme catalyses ATP + H2O + cellular proteinSide 1 = ADP + phosphate + cellular proteinSide 2.. Part of the Sec protein translocase complex. Interacts with the SecYEG preprotein conducting channel. Has a central role in coupling the hydrolysis of ATP to the transfer of proteins into and across the cell membrane, serving both as a receptor for the preprotein-SecB complex and as an ATP-driven molecular motor driving the stepwise translocation of polypeptide chains across the membrane. This chain is Protein translocase subunit SecA 1, found in Ruegeria pomeroyi (strain ATCC 700808 / DSM 15171 / DSS-3) (Silicibacter pomeroyi).